Reading from the N-terminus, the 440-residue chain is C4-dicarboxylate transport protein (440 aa).

Transmembrane regions (helical) follow at residues 15 to 35 (VLVA…TGVA), 46 to 66 (LIKM…IAGM), 78 to 98 (YALL…LVVV), 146 to 166 (AFAN…GFAL), 190 to 210 (IINM…AFTI), 224 to 244 (LMAC…GGIC), 291 to 311 (VVGL…SIYL), 332 to 352 (ITLL…TGSG), and 354 to 374 (IVLA…LALI). The tract at residues 419–440 (GGSPLVDTRPTDDLGVAEGPAR) is disordered.

Belongs to the dicarboxylate/amino acid:cation symporter (DAACS) (TC 2.A.23) family.

It is found in the cell inner membrane. Responsible for the transport of dicarboxylates such as succinate, fumarate, and malate from the periplasm across the membrane. This is C4-dicarboxylate transport protein from Pseudomonas entomophila (strain L48).